The primary structure comprises 691 residues: Elongation factor G (691 aa).

Residues 8-282 (ERVRNIGIAA…AVIDYLPAPI (275 aa)) form the tr-type G domain. Residues 17 to 24 (AHIDAGKT), 81 to 85 (DTPGH), and 135 to 138 (NKMD) contribute to the GTP site.

Belongs to the TRAFAC class translation factor GTPase superfamily. Classic translation factor GTPase family. EF-G/EF-2 subfamily.

It is found in the cytoplasm. Its function is as follows. Catalyzes the GTP-dependent ribosomal translocation step during translation elongation. During this step, the ribosome changes from the pre-translocational (PRE) to the post-translocational (POST) state as the newly formed A-site-bound peptidyl-tRNA and P-site-bound deacylated tRNA move to the P and E sites, respectively. Catalyzes the coordinated movement of the two tRNA molecules, the mRNA and conformational changes in the ribosome. This Prochlorococcus marinus (strain SARG / CCMP1375 / SS120) protein is Elongation factor G.